The following is a 210-amino-acid chain: 3-hexulose-6-phosphate synthase (210 aa).

The protein belongs to the HPS/KGPDC family. HPS subfamily.

It catalyses the reaction D-ribulose 5-phosphate + formaldehyde = D-arabino-hex-3-ulose 6-phosphate. Its pathway is one-carbon metabolism; formaldehyde assimilation via RuMP pathway; D-fructose 6-phosphate from D-ribulose 5-phosphate and formaldehyde: step 1/2. Its function is as follows. Catalyzes the condensation of ribulose 5-phosphate with formaldehyde to form 3-hexulose 6-phosphate. In Staphylococcus aureus (strain MRSA252), this protein is 3-hexulose-6-phosphate synthase.